Reading from the N-terminus, the 1106-residue chain is GYF domain-containing protein gyf-1 (1106 aa).

The segment covering 1–17 (MSSVSSAEPTAQQNFNP) has biased composition (polar residues). Disordered stretches follow at residues 1 to 50 (MSSV…GGFD), 160 to 370 (GALQ…DSTV), and 383 to 434 (KAST…SAWS). A compositionally biased stretch (low complexity) spans 30–42 (RGGSISSGNNRSS). Residues 162–180 (LQNGQSPTSRWAPKSSWNK) are compositionally biased toward polar residues. Gly residues predominate over residues 207–224 (GRGGGRIGGENGFGGATN). Residues 229–243 (AAQNEDSPGTYQSKF) are compositionally biased toward polar residues. Residues 248-261 (RGGGAGSVGRGGST) show a composition bias toward gly residues. Residues 306–322 (VGSTSRTSTNAAPQSSE) show a composition bias toward polar residues. Low complexity-rich tracts occupy residues 334–353 (QRTQ…QQAQ) and 390–410 (PPQQ…APSR). The region spanning 459-508 (PVQFYYMDPTETRRGPFPKDQMNVWFKAGYFTDESLRVQRGENGEYKTIG) is the GYF domain. The stretch at 584–746 (LDDHNRRLAE…ERKRAAERER (163 aa)) forms a coiled coil. Disordered stretches follow at residues 778–811 (AFTG…KTAP), 909–928 (KNSQ…SAKV), 1026–1076 (AGGR…DGNI), and 1087–1106 (RLNK…PSRR). The segment covering 786-801 (VSPSGSEESDEWISTS) has biased composition (polar residues). A compositionally biased stretch (low complexity) spans 1046-1057 (SDSNSGSNSNSG).

The protein is GYF domain-containing protein gyf-1 of Caenorhabditis elegans.